The primary structure comprises 552 residues: uncharacterized protein (552 aa).

The disordered stretch occupies residues 1 to 59; the sequence is MPLEKTNTHDSTATVEDQEATDNPMHLTQSRMLDLAGNPNRTTSRQSETLFPNGVDLNY. Polar residues predominate over residues 39 to 50; the sequence is PNRTTSRQSETL. Transmembrane regions (helical) follow at residues 116 to 136, 158 to 178, 181 to 201, 203 to 223, 238 to 258, 271 to 291, 345 to 365, 383 to 403, 424 to 444, 450 to 470, 484 to 506, and 519 to 539; these read ITIV…VIAG, LMVV…EMIG, IVYL…ALAP, IACL…PLTL, GLAI…GPLV, WIFW…LPVP, ILVC…GYFF, GLMF…TPFL, LVGM…FAWT, IWIG…LFYF, CASA…PLFI, and FFLL…FYLF.

This sequence belongs to the major facilitator superfamily.

The protein localises to the membrane. This is an uncharacterized protein from Schizosaccharomyces pombe (strain 972 / ATCC 24843) (Fission yeast).